We begin with the raw amino-acid sequence, 435 residues long: Probable glycine dehydrogenase (decarboxylating) subunit 1 (435 aa).

The protein belongs to the GcvP family. N-terminal subunit subfamily. The glycine cleavage system is composed of four proteins: P, T, L and H. In this organism, the P 'protein' is a heterodimer of two subunits.

The enzyme catalyses N(6)-[(R)-lipoyl]-L-lysyl-[glycine-cleavage complex H protein] + glycine + H(+) = N(6)-[(R)-S(8)-aminomethyldihydrolipoyl]-L-lysyl-[glycine-cleavage complex H protein] + CO2. Its function is as follows. The glycine cleavage system catalyzes the degradation of glycine. The P protein binds the alpha-amino group of glycine through its pyridoxal phosphate cofactor; CO(2) is released and the remaining methylamine moiety is then transferred to the lipoamide cofactor of the H protein. In Coprothermobacter proteolyticus (strain ATCC 35245 / DSM 5265 / OCM 4 / BT), this protein is Probable glycine dehydrogenase (decarboxylating) subunit 1.